The chain runs to 418 residues: Serine hydroxymethyltransferase 2 (418 aa).

(6S)-5,6,7,8-tetrahydrofolate-binding positions include leucine 121 and 125–127 (GHL). N6-(pyridoxal phosphate)lysine is present on lysine 230. Residue 355-357 (SPF) coordinates (6S)-5,6,7,8-tetrahydrofolate.

The protein belongs to the SHMT family. As to quaternary structure, homodimer. The cofactor is pyridoxal 5'-phosphate.

The protein localises to the cytoplasm. It catalyses the reaction (6R)-5,10-methylene-5,6,7,8-tetrahydrofolate + glycine + H2O = (6S)-5,6,7,8-tetrahydrofolate + L-serine. It functions in the pathway one-carbon metabolism; tetrahydrofolate interconversion. Its pathway is amino-acid biosynthesis; glycine biosynthesis; glycine from L-serine: step 1/1. Its function is as follows. Catalyzes the reversible interconversion of serine and glycine with tetrahydrofolate (THF) serving as the one-carbon carrier. This reaction serves as the major source of one-carbon groups required for the biosynthesis of purines, thymidylate, methionine, and other important biomolecules. Also exhibits THF-independent aldolase activity toward beta-hydroxyamino acids, producing glycine and aldehydes, via a retro-aldol mechanism. This is Serine hydroxymethyltransferase 2 from Pseudomonas aeruginosa (strain ATCC 15692 / DSM 22644 / CIP 104116 / JCM 14847 / LMG 12228 / 1C / PRS 101 / PAO1).